Here is a 780-residue protein sequence, read N- to C-terminus: Ribonucleoside-diphosphate reductase large subunit (780 aa).

Substrate-binding positions include Thr177, 192-193 (SC), Gly223, 393-397 (NLCAE), and 595-599 (PTVGS). Residues Cys193 and Cys409 are joined by a disulfide bond. The active-site Proton acceptor is Asn393. Residue Cys395 is the Cysteine radical intermediate of the active site. The active-site Proton acceptor is Glu397.

The protein belongs to the ribonucleoside diphosphate reductase large chain family. In terms of assembly, heterotetramer composed of a homodimer of the large subunit (R1) and a homodimer of the small subunit (R2). Larger multisubunit protein complex are also active, composed of (R1)n(R2)n.

It catalyses the reaction a 2'-deoxyribonucleoside 5'-diphosphate + [thioredoxin]-disulfide + H2O = a ribonucleoside 5'-diphosphate + [thioredoxin]-dithiol. Its function is as follows. Ribonucleoside-diphosphate reductase holoenzyme provides the precursors necessary for viral DNA synthesis. Allows virus growth in non-dividing cells, as well as reactivation from latency in infected hosts. Catalyzes the biosynthesis of deoxyribonucleotides from the corresponding ribonucleotides. The protein is Ribonucleoside-diphosphate reductase large subunit of Connochaetes taurinus (Blue wildebeest).